Here is a 653-residue protein sequence, read N- to C-terminus: Beta-galactosidase (653 aa).

The first 22 residues, 1–22, serve as a signal peptide directing secretion; it reads MPGVVRLLALLLVPLLLGSARG. The propeptide occupies 23–27; the sequence is LHNAT. N-linked (GlcNAc...) asparagine glycosylation occurs at N25. Residue Y82 participates in substrate binding. N-linked (GlcNAc...) asparagine glycosylation occurs at N96. Substrate contacts are provided by E128 and N186. E187 (proton donor) is an active-site residue. Residues C194 and C229 are joined by a disulfide bond. A glycan (N-linked (GlcNAc...) asparagine) is linked at N246. E267 functions as the Nucleophile in the catalytic mechanism. Y332 contacts substrate. N-linked (GlcNAc...) asparagine glycans are attached at residues N463, N497, and N554. The cysteines at positions 625 and 633 are disulfide-linked.

This sequence belongs to the glycosyl hydrolase 35 family. As to quaternary structure, homodimer. May form higher multimers.

It localises to the lysosome. It catalyses the reaction Hydrolysis of terminal non-reducing beta-D-galactose residues in beta-D-galactosides.. Its function is as follows. Cleaves beta-linked terminal galactosyl residues from gangliosides, glycoproteins, and glycosaminoglycans. The sequence is that of Beta-galactosidase (GLB1) from Bos taurus (Bovine).